The sequence spans 310 residues: MSGERAKRFPLALEDLKRAPRKSEVRSGSGERHAASAVPKAADKPAAVLKPVAKTGAARALPGTAAAKPATAPKPTVLKPAMPKPAAPTIAPAGAFALTSERVRERMVERLRANGVTDARVLDAMAAVPRHMFVDPGLATQAYEDAALPIGHQQTISKPSVVARMIELAMAGRTLERVLEIGTGCGYQAAVLSHVARDVYSIERIKPLYERAKLNLRPLRVPNIRLHYGDGRVGLPSAAPFDAIVIAAAGLDVPQALLEQLAIGGRLVAPVGAQSGQHQVLTLVERVAPAQWRESRLDRVFFVPLKSGVI.

Disordered regions lie at residues 1-46 and 60-79; these read MSGE…DKPA and ALPG…TVLK. Basic and acidic residues predominate over residues 14 to 34; that stretch reads EDLKRAPRKSEVRSGSGERHA. Residues 35-46 are compositionally biased toward low complexity; sequence ASAVPKAADKPA. Serine 157 is an active-site residue.

Belongs to the methyltransferase superfamily. L-isoaspartyl/D-aspartyl protein methyltransferase family.

Its subcellular location is the cytoplasm. It carries out the reaction [protein]-L-isoaspartate + S-adenosyl-L-methionine = [protein]-L-isoaspartate alpha-methyl ester + S-adenosyl-L-homocysteine. Catalyzes the methyl esterification of L-isoaspartyl residues in peptides and proteins that result from spontaneous decomposition of normal L-aspartyl and L-asparaginyl residues. It plays a role in the repair and/or degradation of damaged proteins. This is Protein-L-isoaspartate O-methyltransferase from Burkholderia ambifaria (strain ATCC BAA-244 / DSM 16087 / CCUG 44356 / LMG 19182 / AMMD) (Burkholderia cepacia (strain AMMD)).